The sequence spans 522 residues: Glucose-6-phosphate 1-dehydrogenase (522 aa).

Residues 40–47 (GASGDLAK), R74, and K177 each bind NADP(+). Residues K177, 207-211 (HYLGK), E245, and D264 contribute to the D-glucose 6-phosphate site. The active-site Proton acceptor is H269. Residue R364 participates in NADP(+) binding. Residues K367 and K372 each contribute to the D-glucose 6-phosphate site. Positions 373, 377, and 401 each coordinate NADP(+). Residue Q403 participates in D-glucose 6-phosphate binding. Residues 409-411 (YMK), 429-431 (DLT), R495, and W517 each bind NADP(+).

It belongs to the glucose-6-phosphate dehydrogenase family.

Its subcellular location is the cytoplasm. The protein localises to the cytosol. The catalysed reaction is D-glucose 6-phosphate + NADP(+) = 6-phospho-D-glucono-1,5-lactone + NADPH + H(+). It participates in carbohydrate degradation; pentose phosphate pathway; D-ribulose 5-phosphate from D-glucose 6-phosphate (oxidative stage): step 1/3. Functionally, cytosolic glucose-6-phosphate dehydrogenase that catalyzes the first and rate-limiting step of the oxidative branch within the pentose phosphate pathway/shunt, an alternative route to glycolysis for the dissimilation of carbohydrates and a major source of reducing power and metabolic intermediates for fatty acid and nucleic acid biosynthetic processes. The polypeptide is Glucose-6-phosphate 1-dehydrogenase (gspd-1) (Caenorhabditis elegans).